The primary structure comprises 172 residues: Adenine phosphoribosyltransferase (172 aa).

The protein belongs to the purine/pyrimidine phosphoribosyltransferase family. In terms of assembly, homodimer.

Its subcellular location is the cytoplasm. The catalysed reaction is AMP + diphosphate = 5-phospho-alpha-D-ribose 1-diphosphate + adenine. It participates in purine metabolism; AMP biosynthesis via salvage pathway; AMP from adenine: step 1/1. In terms of biological role, catalyzes a salvage reaction resulting in the formation of AMP, that is energically less costly than de novo synthesis. In Gloeothece citriformis (strain PCC 7424) (Cyanothece sp. (strain PCC 7424)), this protein is Adenine phosphoribosyltransferase.